A 156-amino-acid polypeptide reads, in one-letter code: Putative type II restriction enzyme ApeKORF2002P (156 aa).

To M.jannaschii MJ1199.

The enzyme catalyses Endonucleolytic cleavage of DNA to give specific double-stranded fragments with terminal 5'-phosphates.. A putative type II restriction enzyme, its methylase would be APE_2002. The polypeptide is Putative type II restriction enzyme ApeKORF2002P (Aeropyrum pernix (strain ATCC 700893 / DSM 11879 / JCM 9820 / NBRC 100138 / K1)).